The sequence spans 357 residues: ATP-dependent 6-phosphofructokinase (357 aa).

ATP contacts are provided by residues Gly-12, 80–81 (KG), and 107–110 (GDGS). Position 108 (Asp-108) interacts with Mg(2+). Substrate is bound by residues 131 to 133 (TID), Arg-168, 175 to 177 (MGR), Glu-229, Arg-272, and 278 to 281 (HIQR). Asp-133 acts as the Proton acceptor in catalysis.

It belongs to the phosphofructokinase type A (PFKA) family. Mixed-substrate PFK group III subfamily. In terms of assembly, homodimer or homotetramer. The cofactor is Mg(2+).

The protein resides in the cytoplasm. The catalysed reaction is beta-D-fructose 6-phosphate + ATP = beta-D-fructose 1,6-bisphosphate + ADP + H(+). Its pathway is carbohydrate degradation; glycolysis; D-glyceraldehyde 3-phosphate and glycerone phosphate from D-glucose: step 3/4. Subject to allosteric activation by ADP and other diphosphonucleosides, and inhibition by phosphoenolpyruvate. Functionally, catalyzes the phosphorylation of D-fructose 6-phosphate to fructose 1,6-bisphosphate by ATP, the first committing step of glycolysis. In Trichormus variabilis (strain ATCC 29413 / PCC 7937) (Anabaena variabilis), this protein is ATP-dependent 6-phosphofructokinase.